Here is a 65-residue protein sequence, read N- to C-terminus: MFTMKKSLLLLFFLGAINLPLCQEERNAEEERRDGDDEGSVEVQKRFFPLLFGALSSMMPKLFGK.

A signal peptide spans methionine 1 to cysteine 22. A propeptide spanning residues glutamine 23–glutamine 44 is cleaved from the precursor. The residue at position 63 (phenylalanine 63) is a Phenylalanine amide.

As to expression, expressed by the skin glands.

It is found in the secreted. In terms of biological role, has antimicrobial activity against Gram-positive bacteria S.aureus ATCC 2592 (MIC=2.5 uM), S.aureus ATCC 43300 (MIC=2.5 uM) and B.subtilis (MIC=15.0 uM), against Gram-negative bacteria E.coli ML-35P (MIC=30.0 uM), P.aeruginosa PA01 (MIC=2.5 uM) and P.aeruginosa ATCC 27853 (MIC=2.5 uM) and against fungus C.albicans ATCC 2002 (MIC=5.0 uM). In Limnonectes kuhlii (Kuhl's Creek frog), this protein is Temporin-LK1.